We begin with the raw amino-acid sequence, 295 residues long: Acetylglutamate kinase (295 aa).

Substrate-binding positions include 64–65, R86, and N190; that span reads GG.

Belongs to the acetylglutamate kinase family. ArgB subfamily.

The protein resides in the cytoplasm. The enzyme catalyses N-acetyl-L-glutamate + ATP = N-acetyl-L-glutamyl 5-phosphate + ADP. It participates in amino-acid biosynthesis; L-arginine biosynthesis; N(2)-acetyl-L-ornithine from L-glutamate: step 2/4. In terms of biological role, catalyzes the ATP-dependent phosphorylation of N-acetyl-L-glutamate. In Heliobacterium modesticaldum (strain ATCC 51547 / Ice1), this protein is Acetylglutamate kinase.